Here is a 967-residue protein sequence, read N- to C-terminus: RNA polymerase-associated protein RapA (967 aa).

Residues 163–337 (EVGQRTAPRV…FARLSLLDPD (175 aa)) form the Helicase ATP-binding domain. An ATP-binding site is contributed by 176 to 183 (DEVGLGKT). Positions 283-286 (DEAH) match the DEAH box motif. One can recognise a Helicase C-terminal domain in the interval 489-660 (RLEWLITFLK…KFLQNPTALE (172 aa)).

Belongs to the SNF2/RAD54 helicase family. RapA subfamily. Interacts with the RNAP. Has a higher affinity for the core RNAP than for the holoenzyme. Its ATPase activity is stimulated by binding to RNAP.

Transcription regulator that activates transcription by stimulating RNA polymerase (RNAP) recycling in case of stress conditions such as supercoiled DNA or high salt concentrations. Probably acts by releasing the RNAP, when it is trapped or immobilized on tightly supercoiled DNA. Does not activate transcription on linear DNA. Probably not involved in DNA repair. The protein is RNA polymerase-associated protein RapA of Pasteurella multocida (strain Pm70).